The chain runs to 351 residues: Protein FAM118B (351 aa).

Alanine 2 is modified (N-acetylalanine). Serine 9 is subject to Phosphoserine.

This sequence belongs to the FAM118 family.

The protein localises to the nucleus. It is found in the cajal body. Its function is as follows. May play a role in Cajal bodies formation. In Bos taurus (Bovine), this protein is Protein FAM118B (FAM118B).